An 883-amino-acid polypeptide reads, in one-letter code: Bifunctional heparan sulfate N-deacetylase/N-sulfotransferase 2 (883 aa).

Over 1–18 the chain is Cytoplasmic; sequence MLQLWKVVRPARQLELHR. Residues 19 to 39 form a helical; Signal-anchor for type II membrane protein membrane-spanning segment; the sequence is LILLLIAFSLGSMGFLAYYVS. Topologically, residues 40–883 are lumenal; it reads TSPKAKEPLP…REELQHSSLG (844 aa). Positions 41 to 597 are heparan sulfate N-deacetylase 2; the sequence is SPKAKEPLPL…KRHKDIWSKE (557 aa). A disordered region spans residues 49–81; it reads PLPLGDCSSGGAAGPGPARPPVPPRPPRPPETA. Over residues 65-78 the composition is skewed to pro residues; that stretch reads PARPPVPPRPPRPP. N-linked (GlcNAc...) asparagine glycans are attached at residues Asn-233, Asn-350, and Asn-400. Residues 598–883 form a heparan sulfate N-sulfotransferase 2 region; the sequence is KTCDRLPKFL…REELQHSSLG (286 aa). Residue Lys-613 is the For sulfotransferase activity of the active site. 613 to 617 contributes to the 3'-phosphoadenylyl sulfate binding site; sequence KTGTT. Residue Asn-666 is glycosylated (N-linked (GlcNAc...) asparagine). A 3'-phosphoadenylyl sulfate-binding site is contributed by Ser-711. N-linked (GlcNAc...) asparagine glycosylation is found at Asn-726 and Asn-802. Cys-817 and Cys-827 are oxidised to a cystine. 3'-phosphoadenylyl sulfate is bound at residue 832-836; it reads KGRRY.

This sequence belongs to the sulfotransferase 1 family. NDST subfamily. In terms of assembly, monomer.

The protein resides in the golgi apparatus membrane. The catalysed reaction is alpha-D-glucosaminyl-[heparan sulfate](n) + 3'-phosphoadenylyl sulfate = N-sulfo-alpha-D-glucosaminyl-[heparan sulfate](n) + adenosine 3',5'-bisphosphate + 2 H(+). It participates in glycan metabolism; heparan sulfate biosynthesis. It functions in the pathway glycan metabolism; heparin biosynthesis. In terms of biological role, essential bifunctional enzyme that catalyzes both the N-deacetylation and the N-sulfation of glucosamine (GlcNAc) of the glycosaminoglycan in heparan sulfate. Modifies the GlcNAc-GlcA disaccharide repeating sugar backbone to make N-sulfated heparosan, a prerequisite substrate for later modifications in heparin biosynthesis. Plays a role in determining the extent and pattern of sulfation of heparan sulfate. Required for the exosomal release of SDCBP, CD63 and syndecan. The polypeptide is Bifunctional heparan sulfate N-deacetylase/N-sulfotransferase 2 (NDST2) (Homo sapiens (Human)).